The primary structure comprises 213 residues: Putative protein Brevis radix-like 3 (213 aa).

The tract at residues C7 to D27 is disordered. The 56-residue stretch at R158–L213 folds into the BRX domain.

This sequence belongs to the BRX family.

It localises to the nucleus. This chain is Putative protein Brevis radix-like 3 (BRXL3), found in Oryza sativa subsp. japonica (Rice).